The following is a 180-amino-acid chain: Ribosome maturation factor RimM (180 aa).

The 81-residue stretch at 99 to 179 (NNEYYWKDIV…IVIKNWKQTF (81 aa)) folds into the PRC barrel domain.

The protein belongs to the RimM family. In terms of assembly, binds ribosomal protein uS19.

The protein localises to the cytoplasm. In terms of biological role, an accessory protein needed during the final step in the assembly of 30S ribosomal subunit, possibly for assembly of the head region. Essential for efficient processing of 16S rRNA. May be needed both before and after RbfA during the maturation of 16S rRNA. It has affinity for free ribosomal 30S subunits but not for 70S ribosomes. The chain is Ribosome maturation factor RimM from Buchnera aphidicola subsp. Baizongia pistaciae (strain Bp).